Consider the following 739-residue polypeptide: Ankyrin repeat and SAM domain-containing protein 6 (739 aa).

8 ANK repeats span residues 1–30 (MGASVLAMAARGGHTHTVKLLLENGAFVDD), 57–86 (LEVRALLAAAQHGQGAAVALLLDWGSDARV), 91–120 (TGWSALMLAAAGGSLSVCQQLVERGADPDH), 124–156 (LGNTALEVALQLRRRDVQKYLDNITSVRPRPDD), 158–188 (KKRPDVFHALKLGNAQLVKEIVEQDAAQVDV), 192–221 (DGASPLMMAAVSGQLEVVQLLVEKRADVDR), 226–255 (HGWTALMQATYHGNKEVVKFLLSQGADVQL), and 259–290 (NGYTAFDLVMLLNDPDTELVRLLASVCMLVDK). A compositionally biased stretch (basic residues) spans 295–305 (QRGKSALRRRA). 2 disordered regions span residues 295–320 (QRGKSALRRRASAGTPSPPEDKTGLK) and 449–645 (LRDA…ITDE). Polar residues predominate over residues 462-478 (PGRSSAGSDTASISRVV). 2 stretches are compositionally biased toward low complexity: residues 490–506 (GPSPSNSGSYNSAHSSG) and 582–592 (SSRSKSTSPTL). A compositionally biased stretch (pro residues) spans 593-603 (TPSPSPTPAHT). Residues 604–641 (PAPAHTPAHRPTGASADSQGSASTQQRSRSSGGSSSGT) show a composition bias toward low complexity. The 64-residue stretch at 643–706 (TDEDELSGIL…LAAISELNAG (64 aa)) folds into the SAM domain.

The protein localises to the cell projection. The protein resides in the cilium. Functionally, required for renal function. The chain is Ankyrin repeat and SAM domain-containing protein 6 (anks6) from Danio rerio (Zebrafish).